The sequence spans 229 residues: 23 kDa piroplasm membrane protein (229 aa).

A signal peptide spans 1–19 (MNKYFKVFFFVLLTHALKS). Topologically, residues 20–203 (SLIFGQATLQ…EKEETSKKKY (184 aa)) are extracellular. A helical transmembrane segment spans residues 204 to 224 (VLMVVVVVVFVVVASLVVFLV). The Cytoplasmic portion of the chain corresponds to 225-229 (KFCLK).

The protein resides in the membrane. In Theileria annulata, this protein is 23 kDa piroplasm membrane protein.